Here is a 221-residue protein sequence, read N- to C-terminus: Protein GrpE (221 aa).

Positions 1–83 (MEQEQKATQE…AKNCRTRSED (83 aa)) are disordered. Over residues 23–32 (QEEKAEERGG) the composition is skewed to basic and acidic residues. Positions 41–53 (ENLQQENTQAQQE) are enriched in low complexity.

Belongs to the GrpE family. Homodimer.

The protein localises to the cytoplasm. Functionally, participates actively in the response to hyperosmotic and heat shock by preventing the aggregation of stress-denatured proteins, in association with DnaK and GrpE. It is the nucleotide exchange factor for DnaK and may function as a thermosensor. Unfolded proteins bind initially to DnaJ; upon interaction with the DnaJ-bound protein, DnaK hydrolyzes its bound ATP, resulting in the formation of a stable complex. GrpE releases ADP from DnaK; ATP binding to DnaK triggers the release of the substrate protein, thus completing the reaction cycle. Several rounds of ATP-dependent interactions between DnaJ, DnaK and GrpE are required for fully efficient folding. The chain is Protein GrpE from Geobacillus stearothermophilus (Bacillus stearothermophilus).